The following is a 390-amino-acid chain: Alcohol dehydrogenase-like 7 (390 aa).

C56, S58, H78, C108, C111, C114, C122, and C187 together coordinate Zn(2+). Positions 58 and 78 each coordinate an alcohol. S58 is a binding site for NAD(+). NAD(+) is bound by residues 212 to 217 (GLGSIG), D236, K241, 306 to 308 (LGV), F334, and R384.

The protein belongs to the zinc-containing alcohol dehydrogenase family. Class-III subfamily. As to quaternary structure, homodimer. Zn(2+) is required as a cofactor.

The protein localises to the cytoplasm. The catalysed reaction is a primary alcohol + NAD(+) = an aldehyde + NADH + H(+). It catalyses the reaction a secondary alcohol + NAD(+) = a ketone + NADH + H(+). This is Alcohol dehydrogenase-like 7 from Arabidopsis thaliana (Mouse-ear cress).